The primary structure comprises 230 residues: Leucyl/phenylalanyl-tRNA--protein transferase (230 aa).

It belongs to the L/F-transferase family.

Its subcellular location is the cytoplasm. The enzyme catalyses N-terminal L-lysyl-[protein] + L-leucyl-tRNA(Leu) = N-terminal L-leucyl-L-lysyl-[protein] + tRNA(Leu) + H(+). It carries out the reaction N-terminal L-arginyl-[protein] + L-leucyl-tRNA(Leu) = N-terminal L-leucyl-L-arginyl-[protein] + tRNA(Leu) + H(+). The catalysed reaction is L-phenylalanyl-tRNA(Phe) + an N-terminal L-alpha-aminoacyl-[protein] = an N-terminal L-phenylalanyl-L-alpha-aminoacyl-[protein] + tRNA(Phe). Its function is as follows. Functions in the N-end rule pathway of protein degradation where it conjugates Leu, Phe and, less efficiently, Met from aminoacyl-tRNAs to the N-termini of proteins containing an N-terminal arginine or lysine. The protein is Leucyl/phenylalanyl-tRNA--protein transferase of Rhodopseudomonas palustris (strain BisB18).